The sequence spans 152 residues: Cell division protein SepF (152 aa).

Basic and acidic residues predominate over residues 23–32 (EVAREPEPMQ). Residues 23–42 (EVAREPEPMQKKTKKEKPSK) are disordered.

The protein belongs to the SepF family. In terms of assembly, homodimer. Interacts with FtsZ.

Its subcellular location is the cytoplasm. In terms of biological role, cell division protein that is part of the divisome complex and is recruited early to the Z-ring. Probably stimulates Z-ring formation, perhaps through the cross-linking of FtsZ protofilaments. Its function overlaps with FtsA. The sequence is that of Cell division protein SepF from Listeria welshimeri serovar 6b (strain ATCC 35897 / DSM 20650 / CCUG 15529 / CIP 8149 / NCTC 11857 / SLCC 5334 / V8).